The following is an 80-amino-acid chain: U19-lycotoxin-Ls1b (80 aa).

The first 22 residues, 1–22 (MSPKVQALIFIVGLITLLAAHA), serve as a signal peptide directing secretion. Positions 23-34 (QEELSDNIESER) are excised as a propeptide. 4 disulfides stabilise this stretch: Cys-36/Cys-50, Cys-43/Cys-55, Cys-49/Cys-66, and Cys-57/Cys-64.

This sequence belongs to the neurotoxin 02 (plectoxin) family. 05 (U19-lycotoxin) subfamily. As to expression, expressed by the venom gland.

It localises to the secreted. This chain is U19-lycotoxin-Ls1b, found in Lycosa singoriensis (Wolf spider).